We begin with the raw amino-acid sequence, 87 residues long: Putative defensin-like protein 238 (87 aa).

An N-terminal signal peptide occupies residues 1–23 (MRSITWFIVFCVFMFIALNHVKG). 4 disulfide bridges follow: Cys-30/Cys-87, Cys-40/Cys-65, Cys-48/Cys-78, and Cys-63/Cys-80.

It belongs to the DEFL family.

It is found in the secreted. The chain is Putative defensin-like protein 238 (SCRL16) from Arabidopsis thaliana (Mouse-ear cress).